Here is a 108-residue protein sequence, read N- to C-terminus: DNA-directed RNA polymerase subunit omega (108 aa).

A disordered region spans residues 1–32 (MTNSQSDAALAAVPDRFDPSAGGPGAYDTPLG).

The protein belongs to the RNA polymerase subunit omega family. In terms of assembly, the RNAP catalytic core consists of 2 alpha, 1 beta, 1 beta' and 1 omega subunit. When a sigma factor is associated with the core the holoenzyme is formed, which can initiate transcription.

The enzyme catalyses RNA(n) + a ribonucleoside 5'-triphosphate = RNA(n+1) + diphosphate. Functionally, promotes RNA polymerase assembly. Latches the N- and C-terminal regions of the beta' subunit thereby facilitating its interaction with the beta and alpha subunits. In Mycobacterium avium (strain 104), this protein is DNA-directed RNA polymerase subunit omega.